A 315-amino-acid polypeptide reads, in one-letter code: tRNA dimethylallyltransferase (315 aa).

Glycine 13–serine 20 lines the ATP pocket. Threonine 15–serine 20 provides a ligand contact to substrate. 2 interaction with substrate tRNA regions span residues aspartate 38–glutamine 41 and glutamine 162–arginine 166.

Belongs to the IPP transferase family. In terms of assembly, monomer. Requires Mg(2+) as cofactor.

The catalysed reaction is adenosine(37) in tRNA + dimethylallyl diphosphate = N(6)-dimethylallyladenosine(37) in tRNA + diphosphate. Its function is as follows. Catalyzes the transfer of a dimethylallyl group onto the adenine at position 37 in tRNAs that read codons beginning with uridine, leading to the formation of N6-(dimethylallyl)adenosine (i(6)A). This Paramagnetospirillum magneticum (strain ATCC 700264 / AMB-1) (Magnetospirillum magneticum) protein is tRNA dimethylallyltransferase.